The primary structure comprises 635 residues: 1-deoxy-D-xylulose-5-phosphate synthase (635 aa).

Residues H78 and 119–121 (GHA) each bind thiamine diphosphate. D150 contributes to the Mg(2+) binding site. Residues 151-152 (GS), N179, F291, and E376 each bind thiamine diphosphate. Residue N179 participates in Mg(2+) binding.

The protein belongs to the transketolase family. DXPS subfamily. In terms of assembly, homodimer. It depends on Mg(2+) as a cofactor. Thiamine diphosphate serves as cofactor.

The catalysed reaction is D-glyceraldehyde 3-phosphate + pyruvate + H(+) = 1-deoxy-D-xylulose 5-phosphate + CO2. It participates in metabolic intermediate biosynthesis; 1-deoxy-D-xylulose 5-phosphate biosynthesis; 1-deoxy-D-xylulose 5-phosphate from D-glyceraldehyde 3-phosphate and pyruvate: step 1/1. Functionally, catalyzes the acyloin condensation reaction between C atoms 2 and 3 of pyruvate and glyceraldehyde 3-phosphate to yield 1-deoxy-D-xylulose-5-phosphate (DXP). This chain is 1-deoxy-D-xylulose-5-phosphate synthase, found in Chlorobaculum tepidum (strain ATCC 49652 / DSM 12025 / NBRC 103806 / TLS) (Chlorobium tepidum).